The following is a 466-amino-acid chain: Hydroxyproline dehydrogenase (466 aa).

Belongs to the proline oxidase family. FAD serves as cofactor.

The catalysed reaction is trans-4-hydroxy-L-proline + a quinone = (3R,5S)-1-pyrroline-3-hydroxy-5-carboxylate + a quinol + H(+). It carries out the reaction L-proline + a quinone = (S)-1-pyrroline-5-carboxylate + a quinol + H(+). It functions in the pathway amino-acid degradation; L-proline degradation into L-glutamate; L-glutamate from L-proline: step 1/2. Dehydrogenase that converts trans-4-L-hydroxyproline to delta-1-pyrroline-3-hydroxy-5-carboxylate (Hyp) using a quinone as the terminal electron acceptor. Can also use proline as a substrate but with a very much lower efficiency. Does not react with other diastereomers of Hyp: trans-4-D-hydroxyproline and cis-4-L-hydroxyproline. This chain is Hydroxyproline dehydrogenase (prodh2), found in Xenopus laevis (African clawed frog).